Here is a 574-residue protein sequence, read N- to C-terminus: MSIGLVILVAVVALLLVVGYGTAVLMRKRNEALLQNLEERKEALYNLPVNDEVEEVKNMHLIGQSQVAFREWNQKWVDLSLNSFADIENNLFEAEGYNNSFRFIKAKHAIGNIESQIDLIEEDIKMIRAALEDLKEQESKNSGRVLHALDLFEKLQTQVAENADSYGQALAEIEKQLENIQSEFSQFVTLNSSGDPVEAAEILDKAEDHILALTHIVEKVPAIVEELTVKLPDQLEDLESGHRKLLESGYHFIETDIESRFQQLHASLKRNEANISALELDNAEYENEQAQEEINALYEIFTREIEAHKVVEKLIKNLPSYLAHTKENNQQLQKEIERLSQTFLISDTETSHVKELQAELSAQEDVVLSAVEDSSETKQAYSVVQEELEAIQERLKEIEDEQISLGEALAEIEKDDANARQKVNIYANKLHTIKRYMEKRNLPGIPDSFLEIFFSTSNNIEELVKELEATRVNIESVNRWLEILGNDMEQLEEETYRIVQDATLTEQLLQYSNRYRSFDDNVQAAFNKSLYVFEHDYDYAQSLEIISKALDLVEPGVTERFVTSYEKTRENIRF.

Topologically, residues 1-7 (MSIGLVI) are extracellular. The chain crosses the membrane as a helical span at residues 8 to 26 (LVAVVALLLVVGYGTAVLM). 5 coiled-coil regions span residues 26 to 47 (MRKRNEALLQNLEERKEALYNL), 105 to 189 (KAKH…QFVT), 258 to 346 (ESRF…FLIS), 375 to 415 (SETK…IEKD), and 455 to 494 (STSNNIEELVKELEATRVNIESVNRWLEILGNDMEQLEEE). Residues 27–574 (RKRNEALLQN…YEKTRENIRF (548 aa)) are Cytoplasmic-facing.

Belongs to the EzrA family.

Its subcellular location is the cell membrane. Its function is as follows. Negative regulator of FtsZ ring formation; modulates the frequency and position of FtsZ ring formation. Inhibits FtsZ ring formation at polar sites. Interacts either with FtsZ or with one of its binding partners to promote depolymerization. The polypeptide is Septation ring formation regulator EzrA (Streptococcus sanguinis (strain SK36)).